We begin with the raw amino-acid sequence, 169 residues long: Ureidoglycolate lyase (169 aa).

This sequence belongs to the ureidoglycolate lyase family. As to quaternary structure, homodimer. Ni(2+) serves as cofactor.

It catalyses the reaction (S)-ureidoglycolate = urea + glyoxylate. It participates in nitrogen metabolism; (S)-allantoin degradation. In terms of biological role, catalyzes the catabolism of the allantoin degradation intermediate (S)-ureidoglycolate, generating urea and glyoxylate. Involved in the utilization of allantoin as nitrogen source. The polypeptide is Ureidoglycolate lyase (Brucella abortus biovar 1 (strain 9-941)).